Reading from the N-terminus, the 493-residue chain is Ribosomal protein uS12 methylthiotransferase RimO (493 aa).

The 117-residue stretch at 5–121 folds into the MTTase N-terminal domain; sequence RTVALVTLGC…ISDRLQTILN (117 aa). Residues Cys14, Cys50, Cys84, Cys198, Cys202, and Cys205 each contribute to the [4Fe-4S] cluster site. The Radical SAM core domain occupies 184 to 415; it reads LGTSPVASVK…QLAEELTSQR (232 aa). The 71-residue stretch at 417-487 folds into the TRAM domain; sequence EERVGETLQV…GVDLVAEHHE (71 aa).

It belongs to the methylthiotransferase family. RimO subfamily. [4Fe-4S] cluster serves as cofactor.

The protein resides in the cytoplasm. The catalysed reaction is L-aspartate(89)-[ribosomal protein uS12]-hydrogen + (sulfur carrier)-SH + AH2 + 2 S-adenosyl-L-methionine = 3-methylsulfanyl-L-aspartate(89)-[ribosomal protein uS12]-hydrogen + (sulfur carrier)-H + 5'-deoxyadenosine + L-methionine + A + S-adenosyl-L-homocysteine + 2 H(+). In terms of biological role, catalyzes the methylthiolation of an aspartic acid residue of ribosomal protein uS12. This Streptomyces griseus subsp. griseus (strain JCM 4626 / CBS 651.72 / NBRC 13350 / KCC S-0626 / ISP 5235) protein is Ribosomal protein uS12 methylthiotransferase RimO.